A 194-amino-acid polypeptide reads, in one-letter code: 5'-deoxynucleotidase VS_2195 (194 aa).

Residues 18–19 and His-33 each bind substrate; that span reads RW. The 113-residue stretch at 30 to 142 folds into the HD domain; the sequence is ISEHSLQVAF…VKQADTICAY (113 aa). The a divalent metal cation site is built by His-33, His-68, and Asp-69. Residues Asp-69, 77–80, and Asp-137 each bind substrate; that span reads DLPT. Asp-137 is an a divalent metal cation binding site.

The protein belongs to the 5DNU family. Homodimer. It depends on a divalent metal cation as a cofactor.

It localises to the cytoplasm. It carries out the reaction a 2'-deoxyribonucleoside 5'-phosphate + H2O = a 2'-deoxyribonucleoside + phosphate. Catalyzes the strictly specific dephosphorylation of 2'-deoxyribonucleoside 5'-monophosphates. This Vibrio atlanticus (strain LGP32) (Vibrio splendidus (strain Mel32)) protein is 5'-deoxynucleotidase VS_2195.